The sequence spans 358 residues: Vascular endothelial growth factor D (358 aa).

Positions 1–21 (MYGEWGMGNILMMFHVYLVQG) are cleaved as a signal peptide. Positions 22 to 93 (FRSEHGPVKD…SRSASHRSTR (72 aa)) are excised as a propeptide. 3 disulfides stabilise this stretch: Cys-116–Cys-158, Cys-147–Cys-194, and Cys-151–Cys-196. 2 N-linked (GlcNAc...) asparagine glycosylation sites follow: Asn-160 and Asn-190. The propeptide occupies 211-358 (SIQTPEEDEC…AQGLYSQENP (148 aa)). One copy of the 1; approximate repeat lies at 227–242 (CPIDMLWDNTKCKCVL). A 4 X 16 AA repeats of C-X(10)-C-X-C-X(1,3)-C region spans residues 227-323 (CPIDMLWDNT…PDTCSCEDRC (97 aa)). A run of 3 repeats spans residues 263–278 (CGPHMTFDEDRCECVC), 282–298 (CPGDLIQHPENCSCFEC), and 306–323 (CQKHKIFHPDTCSCEDRC). Asn-292 carries N-linked (GlcNAc...) asparagine glycosylation.

Belongs to the PDGF/VEGF growth factor family. As to quaternary structure, homodimer; non-covalent and antiparallel. Post-translationally, undergoes a complex proteolytic maturation which generates a variety of processed secreted forms with increased activity toward VEGFR-3 and VEGFR-2. VEGF-D first form an antiparallel homodimer linked by disulfide bonds before secretion. The fully processed VEGF-D is composed mostly of two VEGF homology domains (VHDs) bound by non-covalent interactions. In terms of tissue distribution, highly expressed in fetal and adult lung.

Its subcellular location is the secreted. Growth factor active in angiogenesis, lymphangiogenesis and endothelial cell growth, stimulating their proliferation and migration and also has effects on the permeability of blood vessels. May function in the formation of the venous and lymphatic vascular systems during embryogenesis, and also in the maintenance of differentiated lymphatic endothelium in adults. Binds and activates VEGFR-3 (Flt4) receptor. The polypeptide is Vascular endothelial growth factor D (Mus musculus (Mouse)).